Here is a 157-residue protein sequence, read N- to C-terminus: Large ribosomal subunit protein bL20 (157 aa).

The disordered stretch occupies residues 121 to 157; that stretch reads TSAPAVSAEAAPKAKAAKKPAAKKAAAKKPVAEEAAK. The segment covering 122 to 134 has biased composition (low complexity); that stretch reads SAPAVSAEAAPKA. A compositionally biased stretch (basic residues) spans 135 to 147; sequence KAAKKPAAKKAAA.

The protein belongs to the bacterial ribosomal protein bL20 family.

Its function is as follows. Binds directly to 23S ribosomal RNA and is necessary for the in vitro assembly process of the 50S ribosomal subunit. It is not involved in the protein synthesizing functions of that subunit. The chain is Large ribosomal subunit protein bL20 (rplT) from Arthrobacter sp. (strain FB24).